The primary structure comprises 500 residues: Formate-nitrite transporter 3 (500 aa).

Residues 1–31 are Cytoplasmic-facing; that stretch reads MVLAASPEAYRKVIEYGIKKTKLRIDRLFLQ. Residues 32 to 52 traverse the membrane as a helical segment; it reads AIMAGIYVGMAGHACTALAGA. At 53–69 the chain is on the extracellular side; the sequence is YSTDPANPLAVSKATQK. A helical transmembrane segment spans residues 70 to 90; it reads FLYASLFPVAFIAIIFTGAEL. Residues 91–113 are Cytoplasmic-facing; sequence FTGNTMTMLVCLLERRVTALQLC. A helical transmembrane segment spans residues 114-134; that stretch reads INWICSLVGNWAGALFAAYFL. Residues 135-164 lie on the Extracellular side of the membrane; the sequence is SYLPGVLQDPDHLHYLEDVAAHKTELSFLQ. The helical transmembrane segment at 165-185 threads the bilayer; that stretch reads CFCLAVGCNTFVCLAVWFVIA. Residues 186–192 are Cytoplasmic-facing; that stretch reads SDDAAGK. The helical transmembrane segment at 193 to 213 threads the bilayer; sequence IMSMWFPIVSFCVAGYEHIIA. Topologically, residues 214 to 237 are extracellular; it reads NFYTLQCALMHGVGPGVGTVILKN. The helical transmembrane segment at 238-258 threads the bilayer; sequence FIPTLLGNIVGGCGLVGAVYW. The Cytoplasmic segment spans residues 259 to 500; sequence YNFYPTVCVV…ALEEHPASTI (242 aa). A disordered region spans residues 411 to 500; that stretch reads PLRENSGVPS…ALEEHPASTI (90 aa). 2 stretches are compositionally biased toward basic and acidic residues: residues 428 to 444 and 466 to 485; these read GRVR…RGGE and FHPH…ETRV.

It belongs to the FNT transporter (TC 1.A.16) family. In terms of assembly, homopentamer.

The protein resides in the cell membrane. The enzyme catalyses (S)-lactate(in) + H(+)(in) = (S)-lactate(out) + H(+)(out). It carries out the reaction formate(in) + H(+)(in) = formate(out) + H(+)(out). It catalyses the reaction pyruvate(out) + H(+)(out) = pyruvate(in) + H(+)(in). The catalysed reaction is acetate(out) + H(+)(out) = acetate(in) + H(+)(in). With respect to regulation, inhibited by p-chloromercuribenzene sulfonate (pCMBS). Methyl methanethiosulfonate (MMTS) inhibits L-lactate but not formate transport. Inhibited by the Malaria Box compound MMV007839. Inhibited by BH-296, BH-317, BH-326 and BH-388 compounds. Functionally, monocarboxylate-proton symporter; active in acidic-to-neutral pH range. Transports L-lactate and formate. In Toxoplasma gondii (strain ATCC 50611 / Me49), this protein is Formate-nitrite transporter 3.